We begin with the raw amino-acid sequence, 62 residues long: DNA-directed RNA polymerase subunit Rpo10 (62 aa).

Cysteine 6, cysteine 9, cysteine 43, and cysteine 44 together coordinate Zn(2+).

Belongs to the archaeal Rpo10/eukaryotic RPB10 RNA polymerase subunit family. In terms of assembly, part of the RNA polymerase complex. The cofactor is Zn(2+).

It is found in the cytoplasm. The catalysed reaction is RNA(n) + a ribonucleoside 5'-triphosphate = RNA(n+1) + diphosphate. Its function is as follows. DNA-dependent RNA polymerase (RNAP) catalyzes the transcription of DNA into RNA using the four ribonucleoside triphosphates as substrates. The polypeptide is DNA-directed RNA polymerase subunit Rpo10 (Methanosarcina mazei (strain ATCC BAA-159 / DSM 3647 / Goe1 / Go1 / JCM 11833 / OCM 88) (Methanosarcina frisia)).